Reading from the N-terminus, the 111-residue chain is Ferredoxin, 2Fe-2S (111 aa).

[2Fe-2S] cluster contacts are provided by Cys-10, Cys-23, Cys-56, and Cys-60.

In terms of assembly, homodimer in solution. [2Fe-2S] cluster is required as a cofactor.

In terms of biological role, ferredoxins are iron-sulfur proteins that transfer electrons in a wide variety of metabolic reactions. The chain is Ferredoxin, 2Fe-2S (fdx4) from Aquifex aeolicus (strain VF5).